A 498-amino-acid chain; its full sequence is Putative ABC transporter ATP-binding protein MM_2387 (498 aa).

ABC transporter domains follow at residues 2–242 and 258–490; these read IELR…TSKS and ISIK…VEEK. ATP-binding positions include 36–43 and 290–297; these read GHSAAGKT and GENGSGKT.

It belongs to the ABC transporter superfamily.

It localises to the cell membrane. Its function is as follows. Probably part of an ABC transporter complex. Responsible for energy coupling to the transport system. The sequence is that of Putative ABC transporter ATP-binding protein MM_2387 from Methanosarcina mazei (strain ATCC BAA-159 / DSM 3647 / Goe1 / Go1 / JCM 11833 / OCM 88) (Methanosarcina frisia).